Here is a 78-residue protein sequence, read N- to C-terminus: Large ribosomal subunit protein bL28 (78 aa).

The protein belongs to the bacterial ribosomal protein bL28 family.

This Prochlorococcus marinus (strain MIT 9303) protein is Large ribosomal subunit protein bL28.